Consider the following 386-residue polypeptide: MKLHEYQGKEVLRDFGVNVQDGKVATTPEEVQAIYKEYGQPVVVKAQVHVGGRGKAGGVKYSANEDKALENAKNILGMDIKGLTVNKVLVTKAVDIDAGTEYYVGMIVDRNVQSYTLMASAEGGMEIEEVAATNPEKIIRHRVDPVTGLRPYEAREVAIKAGFRGNLNKIADMMVKMSKAALERDAVLVEINPLFVDADGTPIALDTKFEIDDNAMYRHKDLAHYRELSAEHPLEVEASDYGFAYVKLDDGNVGVLGNGAGIVMTTLDVVNRAGAKPANFLDIGGGAKADVVYNAVKLVSKDPDVKAIFINIFGGITRADEVAKGVIRALDEGILTKPVRMRIAGTAEDEAKALLNEKNSDLIKMYPTMFEAANEAAKEANALGGK.

The ATP-grasp domain occupies 9-237; that stretch reads KEVLRDFGVN…LSAEHPLEVE (229 aa). ATP-binding positions include Lys45, 52-54, Val94, and Glu101; that span reads GRG. Residues Asn192 and Asp206 each coordinate Mg(2+). Residues Asn258 and 315 to 317 each bind substrate; that span reads GIT.

This sequence belongs to the succinate/malate CoA ligase beta subunit family. Heterotetramer of two alpha and two beta subunits. Requires Mg(2+) as cofactor.

The catalysed reaction is succinate + ATP + CoA = succinyl-CoA + ADP + phosphate. The enzyme catalyses GTP + succinate + CoA = succinyl-CoA + GDP + phosphate. It participates in carbohydrate metabolism; tricarboxylic acid cycle; succinate from succinyl-CoA (ligase route): step 1/1. Its function is as follows. Succinyl-CoA synthetase functions in the citric acid cycle (TCA), coupling the hydrolysis of succinyl-CoA to the synthesis of either ATP or GTP and thus represents the only step of substrate-level phosphorylation in the TCA. The beta subunit provides nucleotide specificity of the enzyme and binds the substrate succinate, while the binding sites for coenzyme A and phosphate are found in the alpha subunit. The protein is Succinate--CoA ligase [ADP-forming] subunit beta of Deinococcus radiodurans (strain ATCC 13939 / DSM 20539 / JCM 16871 / CCUG 27074 / LMG 4051 / NBRC 15346 / NCIMB 9279 / VKM B-1422 / R1).